Consider the following 484-residue polypeptide: Bifunctional protein HldE (484 aa).

Residues 1–320 form a ribokinase region; it reads MDFSSITVLC…AELNAQDADA (320 aa). ATP is bound at residue 195–198; it reads NARE. The active site involves Asp265. The cytidylyltransferase stretch occupies residues 349 to 484; sequence FTNGCFDIIH…RIRAAGAADR (136 aa).

This sequence in the N-terminal section; belongs to the carbohydrate kinase PfkB family. It in the C-terminal section; belongs to the cytidylyltransferase family. In terms of assembly, homodimer.

It carries out the reaction D-glycero-beta-D-manno-heptose 7-phosphate + ATP = D-glycero-beta-D-manno-heptose 1,7-bisphosphate + ADP + H(+). The enzyme catalyses D-glycero-beta-D-manno-heptose 1-phosphate + ATP + H(+) = ADP-D-glycero-beta-D-manno-heptose + diphosphate. It functions in the pathway nucleotide-sugar biosynthesis; ADP-L-glycero-beta-D-manno-heptose biosynthesis; ADP-L-glycero-beta-D-manno-heptose from D-glycero-beta-D-manno-heptose 7-phosphate: step 1/4. Its pathway is nucleotide-sugar biosynthesis; ADP-L-glycero-beta-D-manno-heptose biosynthesis; ADP-L-glycero-beta-D-manno-heptose from D-glycero-beta-D-manno-heptose 7-phosphate: step 3/4. Catalyzes the phosphorylation of D-glycero-D-manno-heptose 7-phosphate at the C-1 position to selectively form D-glycero-beta-D-manno-heptose-1,7-bisphosphate. In terms of biological role, catalyzes the ADP transfer from ATP to D-glycero-beta-D-manno-heptose 1-phosphate, yielding ADP-D-glycero-beta-D-manno-heptose. The polypeptide is Bifunctional protein HldE (Gluconacetobacter diazotrophicus (strain ATCC 49037 / DSM 5601 / CCUG 37298 / CIP 103539 / LMG 7603 / PAl5)).